The following is a 90-amino-acid chain: UPF0297 protein ABC1593 (90 aa).

This sequence belongs to the UPF0297 family.

This is UPF0297 protein ABC1593 from Shouchella clausii (strain KSM-K16) (Alkalihalobacillus clausii).